The chain runs to 266 residues: MKLSLSPPPYADAPVVVLISGLGGSGSYWLPQLAVLEQEYQVVCYDQRGTGNNPDTLAEDYSIAQMAAELHQALVAAGIEHYAVVGHALGALVGMQLALDYPASVTVLISVNGWLRINAHTRRCFQVRERLLYSGGAQAWVEAQPLFLYPADWMAARAPRLEAEDALALAHFQGKNNLLRRLNALKRADFSHHADRIRCPVQIICASDDLLVPTACSSELHAALPDSQKMVMPYGGHACNVTDPETFNALLLNGLASLLHHREAAL.

This sequence belongs to the AB hydrolase superfamily. Hydrolase RutD family.

The catalysed reaction is carbamate + 2 H(+) = NH4(+) + CO2. Its function is as follows. Involved in pyrimidine catabolism. May facilitate the hydrolysis of carbamate, a reaction that can also occur spontaneously. The polypeptide is Putative carbamate hydrolase RutD (Escherichia coli (strain B / BL21-DE3)).